Reading from the N-terminus, the 406-residue chain is Tryptophan synthase beta chain (406 aa).

The residue at position 99 (Lys99) is an N6-(pyridoxal phosphate)lysine.

The protein belongs to the TrpB family. As to quaternary structure, tetramer of two alpha and two beta chains. Pyridoxal 5'-phosphate is required as a cofactor.

It catalyses the reaction (1S,2R)-1-C-(indol-3-yl)glycerol 3-phosphate + L-serine = D-glyceraldehyde 3-phosphate + L-tryptophan + H2O. Its pathway is amino-acid biosynthesis; L-tryptophan biosynthesis; L-tryptophan from chorismate: step 5/5. The beta subunit is responsible for the synthesis of L-tryptophan from indole and L-serine. The chain is Tryptophan synthase beta chain from Rhizobium leguminosarum bv. trifolii (strain WSM2304).